A 309-amino-acid polypeptide reads, in one-letter code: Olfactory receptor 10J5 (309 aa).

The Extracellular segment spans residues 1-25 (MKRKNFTEVSEFIFLGFSSFGKHQI). An N-linked (GlcNAc...) asparagine glycan is attached at N5. A helical membrane pass occupies residues 26 to 46 (TLFVVFLTVYILTLVANIIIV). Topologically, residues 47–54 (TIICIDHH) are cytoplasmic. The helical transmembrane segment at 55–75 (LHTPMYFFLSMLASSETVYTL) threads the bilayer. The Extracellular portion of the chain corresponds to 76 to 99 (VIVPRMLLSLIFHNQPISLAGCAT). C97 and C188 form a disulfide bridge. Residues 100 to 120 (QMFFFVILATNNCFLLTAMGY) traverse the membrane as a helical segment. The Cytoplasmic segment spans residues 121–139 (DRYVAICRPLRYTVIMSKG). A helical transmembrane segment spans residues 140-160 (LCAQLVCGSFGIGLTMAVLHV). At 161-196 (TAMFNLPFCGTVVDHFFCDIYPVMKLSCIDTTINEI) the chain is on the extracellular side. A helical membrane pass occupies residues 197-216 (INYGVSSFVIFVPIGLIFIS). Over 217 to 236 (YVLVISSILQIASAEGRKKT) the chain is Cytoplasmic. A helical transmembrane segment spans residues 237–257 (FATCVSHLTVVIVHCGCASIA). Over 258 to 270 (YLKPKSESSIEKD) the chain is Extracellular. Residues 271-291 (LVLSVTYTIITPLLNPVVYSL) form a helical membrane-spanning segment. Residues 292 to 309 (RNKEVKDALCRVVGRNIS) are Cytoplasmic-facing.

This sequence belongs to the G-protein coupled receptor 1 family. As to expression, expressed in both the aorta, the coronary artery and umbilical vein endothelial cells (HUVECs) (at protein level).

It is found in the cell membrane. Functionally, olfactory receptor. Activated by the synthetic floral odorant, lyral, and by alpha-cedrene, a sesquiterpene constituent of cedarwood oil. Its activation increases intracellular Ca(2+). Acts as a key regulator of myogenesis through its actions on cell migration and adhesion by activating the Ca(2+)-dependent AKT signal transduction pathway. Also acts as a regulator of angiogenesis. Moreover, plays a role in the regulation of lipid accumulation in hepatocytes via the cAMP-PKA pathway. May be involved in sperm chemotaxis and motility. This chain is Olfactory receptor 10J5, found in Homo sapiens (Human).